The chain runs to 299 residues: Protease HtpX homolog (299 aa).

The next 2 membrane-spanning stretches (helical) occupy residues 15 to 35 and 39 to 59; these read ILLLVFFLLLALVGYAVGYLF and GLGGLVIALIIGFIYALSMIF. His143 lines the Zn(2+) pocket. The active site involves Glu144. His147 is a Zn(2+) binding site. The next 2 membrane-spanning stretches (helical) occupy residues 158–178 and 198–218; these read IAVALASAITMLSGMAGRMMW and IIMLVVSLLAIVLAPLAATLV. Glu227 serves as a coordination point for Zn(2+).

It belongs to the peptidase M48B family. Zn(2+) serves as cofactor.

Its subcellular location is the cell membrane. The sequence is that of Protease HtpX homolog from Streptococcus pneumoniae (strain P1031).